Consider the following 293-residue polypeptide: uncharacterized protein (293 aa).

In terms of domain architecture, HTH lysR-type spans 1-58 (MQLQELHMLVVLAEELNMRKAAERLFVSQPALSQRLQTIEKAWGTKIFLRSQKGLTVT). A DNA-binding region (H-T-H motif) is located at residues 18–37 (MRKAAERLFVSQPALSQRLQ).

This sequence belongs to the LysR transcriptional regulatory family.

This is an uncharacterized protein from Bacillus subtilis (strain 168).